A 117-amino-acid polypeptide reads, in one-letter code: MKFFIAFACLLAVALANEDANVLRAEQQVNVDGFAYAVELDNSVNVQQKGDLNGEEWVVKGSQSWTSPENVPVSIQYIADANGYQVVSANPPLPTPPPIPEAIQRSLEYIAAHPPSQ.

Positions 1–16 (MKFFIAFACLLAVALA) are cleaved as a signal peptide. A Chitin-binding type R&amp;R domain is found at 31-97 (VDGFAYAVEL…SANPPLPTPP (67 aa)).

Component of the larval cuticle. This chain is Cuticular protein 47Eg (Cpr47Eg), found in Drosophila melanogaster (Fruit fly).